A 74-amino-acid chain; its full sequence is uncharacterized protein (74 aa).

This is an uncharacterized protein from Saccharomyces cerevisiae (strain ATCC 204508 / S288c) (Baker's yeast).